A 156-amino-acid chain; its full sequence is Deoxyuridine 5'-triphosphate nucleotidohydrolase (156 aa).

Residues 76–78, N89, 93–95, and K103 contribute to the substrate site; these read RSG and TVD.

Belongs to the dUTPase family. Requires Mg(2+) as cofactor.

It catalyses the reaction dUTP + H2O = dUMP + diphosphate + H(+). Its pathway is pyrimidine metabolism; dUMP biosynthesis; dUMP from dCTP (dUTP route): step 2/2. In terms of biological role, this enzyme is involved in nucleotide metabolism: it produces dUMP, the immediate precursor of thymidine nucleotides and it decreases the intracellular concentration of dUTP so that uracil cannot be incorporated into DNA. The polypeptide is Deoxyuridine 5'-triphosphate nucleotidohydrolase (Rhizobium leguminosarum bv. trifolii (strain WSM2304)).